The following is an 88-amino-acid chain: Sec-independent protein translocase protein TatA (88 aa).

The helical transmembrane segment at 3-23 threads the bilayer; the sequence is IFGVGLPEVTVILILALLIFG. Positions 56-66 are enriched in basic and acidic residues; that stretch reads MKEEDKDESPK. A disordered region spans residues 56 to 88; it reads MKEEDKDESPKSIESNQSNEINQEKIDSENSNN. Residues 67 to 76 show a composition bias toward polar residues; sequence SIESNQSNEI. Over residues 77 to 88 the composition is skewed to basic and acidic residues; sequence NQEKIDSENSNN.

It belongs to the TatA/E family. In terms of assembly, forms a complex with TatC.

It localises to the cell inner membrane. Part of the twin-arginine translocation (Tat) system that transports large folded proteins containing a characteristic twin-arginine motif in their signal peptide across membranes. TatA could form the protein-conducting channel of the Tat system. The protein is Sec-independent protein translocase protein TatA of Prochlorococcus marinus (strain MIT 9301).